The following is a 379-amino-acid chain: Guanine nucleotide-binding protein subunit alpha-12 (379 aa).

Cysteine 11 carries the S-palmitoyl cysteine lipid modification. The G-alpha domain occupies 54–379 (RLVKILLLGA…QENLKDIMLQ (326 aa)). Residues 57–70 (KILLLGAGESGKST) form a G1 motif region. GTP contacts are provided by residues 65–70 (ESGKST) and 200–203 (LLAR). Serine 69 contributes to the Mg(2+) binding site. The tract at residues 198–206 (DILLARKAT) is G2 motif. Threonine 206 contacts Mg(2+). Threonine 206 is subject to Phosphothreonine. A G3 motif region spans residues 221–230 (FKMVDVGGQR). The G4 motif stretch occupies residues 290–297 (ILFLNKMD). GTP contacts are provided by residues 294–297 (NKMD) and alanine 351. The segment at 349–354 (TTAIDT) is G5 motif.

Belongs to the G-alpha family. G(12) subfamily. As to quaternary structure, g proteins are composed of 3 units; alpha, beta and gamma. The alpha chain contains the guanine nucleotide binding site. Interacts with UBXD5. Interacts (in GTP-bound form) with PPP5C (via TPR repeats); activates PPP5C phosphatase activity and translocates PPP5C to the cell membrane. Interacts with RGS22. Interacts (via N-terminus) with NAPA; the interaction promotes CDH5 localization to plasma membrane. Interacts with CTNND1 (via N-terminus); the interaction regulates CDH1-mediated cell-cell adhesion. Interacts with PPP2R1A; the interaction promotes protein phosphatase 2A activation causing dephosphorylation of MAPT. Interacts (in GTP-bound form) with ARHGEF1. Interacts (in GTP-bound form) with ARHGEF11 (via RGS domain). Interacts (in GTP-bound form) with ARHGEF12 (via RGS domain).

Its subcellular location is the cell membrane. The protein localises to the lateral cell membrane. It localises to the cytoplasm. Its function is as follows. Guanine nucleotide-binding proteins (G proteins) are involved as modulators or transducers in various transmembrane signaling systems. Activates effector molecule RhoA by binding and activating RhoGEFs (ARHGEF12/LARG). GNA12-dependent Rho signaling subsequently regulates transcription factor AP-1 (activating protein-1). GNA12-dependent Rho signaling also regulates protein phosphatese 2A activation causing dephosphorylation of its target proteins. Promotes tumor cell invasion and metastasis by activating RhoA/ROCK signaling pathway and up-regulating pro-inflammatory cytokine production. Inhibits CDH1-mediated cell adhesion in process independent from Rho activation. Together with NAPA promotes CDH5 localization to plasma membrane. May play a role in the control of cell migration through the TOR signaling cascade. The polypeptide is Guanine nucleotide-binding protein subunit alpha-12 (Gna12) (Rattus norvegicus (Rat)).